The following is a 97-amino-acid chain: Co-chaperonin GroES (97 aa).

Belongs to the GroES chaperonin family. As to quaternary structure, heptamer of 7 subunits arranged in a ring. Interacts with the chaperonin GroEL.

It localises to the cytoplasm. Its function is as follows. Together with the chaperonin GroEL, plays an essential role in assisting protein folding. The GroEL-GroES system forms a nano-cage that allows encapsulation of the non-native substrate proteins and provides a physical environment optimized to promote and accelerate protein folding. GroES binds to the apical surface of the GroEL ring, thereby capping the opening of the GroEL channel. In Buchnera aphidicola subsp. Baizongia pistaciae (strain Bp), this protein is Co-chaperonin GroES.